The primary structure comprises 391 residues: Phosphoglycerate kinase (391 aa).

Substrate-binding positions include 21-23, Arg36, 59-62, Arg114, and Arg147; these read DLN and HLGR. ATP-binding positions include Lys198, Glu315, and 344–347; that span reads GGDT.

Belongs to the phosphoglycerate kinase family. Monomer.

The protein localises to the cytoplasm. The enzyme catalyses (2R)-3-phosphoglycerate + ATP = (2R)-3-phospho-glyceroyl phosphate + ADP. It participates in carbohydrate degradation; glycolysis; pyruvate from D-glyceraldehyde 3-phosphate: step 2/5. In Actinobacillus pleuropneumoniae serotype 5b (strain L20), this protein is Phosphoglycerate kinase.